We begin with the raw amino-acid sequence, 316 residues long: 4-hydroxy-3-methylbut-2-enyl diphosphate reductase (316 aa).

Cys-12 serves as a coordination point for [4Fe-4S] cluster. (2E)-4-hydroxy-3-methylbut-2-enyl diphosphate contacts are provided by His-41 and His-74. 2 residues coordinate dimethylallyl diphosphate: His-41 and His-74. Isopentenyl diphosphate-binding residues include His-41 and His-74. Cys-96 contacts [4Fe-4S] cluster. (2E)-4-hydroxy-3-methylbut-2-enyl diphosphate is bound at residue His-124. Residue His-124 participates in dimethylallyl diphosphate binding. Isopentenyl diphosphate is bound at residue His-124. Catalysis depends on Glu-126, which acts as the Proton donor. Thr-167 provides a ligand contact to (2E)-4-hydroxy-3-methylbut-2-enyl diphosphate. Cys-197 contributes to the [4Fe-4S] cluster binding site. Ser-225, Ser-226, Asn-227, and Ser-269 together coordinate (2E)-4-hydroxy-3-methylbut-2-enyl diphosphate. Dimethylallyl diphosphate-binding residues include Ser-225, Ser-226, Asn-227, and Ser-269. The isopentenyl diphosphate site is built by Ser-225, Ser-226, Asn-227, and Ser-269.

It belongs to the IspH family. As to quaternary structure, homodimer. The cofactor is [4Fe-4S] cluster.

It carries out the reaction isopentenyl diphosphate + 2 oxidized [2Fe-2S]-[ferredoxin] + H2O = (2E)-4-hydroxy-3-methylbut-2-enyl diphosphate + 2 reduced [2Fe-2S]-[ferredoxin] + 2 H(+). It catalyses the reaction dimethylallyl diphosphate + 2 oxidized [2Fe-2S]-[ferredoxin] + H2O = (2E)-4-hydroxy-3-methylbut-2-enyl diphosphate + 2 reduced [2Fe-2S]-[ferredoxin] + 2 H(+). Its pathway is isoprenoid biosynthesis; dimethylallyl diphosphate biosynthesis; dimethylallyl diphosphate from (2E)-4-hydroxy-3-methylbutenyl diphosphate: step 1/1. The protein operates within isoprenoid biosynthesis; isopentenyl diphosphate biosynthesis via DXP pathway; isopentenyl diphosphate from 1-deoxy-D-xylulose 5-phosphate: step 6/6. Catalyzes the conversion of 1-hydroxy-2-methyl-2-(E)-butenyl 4-diphosphate (HMBPP) into a mixture of isopentenyl diphosphate (IPP) and dimethylallyl diphosphate (DMAPP). Acts in the terminal step of the DOXP/MEP pathway for isoprenoid precursor biosynthesis. This is 4-hydroxy-3-methylbut-2-enyl diphosphate reductase from Escherichia coli (strain UTI89 / UPEC).